The chain runs to 161 residues: Nucleotide-binding protein PBPRA2024 (161 aa).

It belongs to the YajQ family.

Its function is as follows. Nucleotide-binding protein. This chain is Nucleotide-binding protein PBPRA2024, found in Photobacterium profundum (strain SS9).